The chain runs to 450 residues: Phosphoglucosamine mutase 2 (450 aa).

Catalysis depends on Ser-101, which acts as the Phosphoserine intermediate. Residues Ser-101, Asp-245, Asp-247, and Asp-249 each contribute to the Mg(2+) site. A Phosphoserine modification is found at Ser-101.

Belongs to the phosphohexose mutase family. Mg(2+) serves as cofactor. Post-translationally, activated by phosphorylation.

The catalysed reaction is alpha-D-glucosamine 1-phosphate = D-glucosamine 6-phosphate. Catalyzes the conversion of glucosamine-6-phosphate to glucosamine-1-phosphate. In Shewanella sp. (strain MR-7), this protein is Phosphoglucosamine mutase 2.